A 2472-amino-acid chain; its full sequence is Spectrin alpha chain, non-erythrocytic 1 (2472 aa).

Residue methionine 1 is modified to N-acetylmethionine. Spectrin repeat units lie at residues 45-146 (RFQF…IKLL), 150-251 (KLVQ…QGKL), 256-358 (EVQR…ARLN), 361-465 (YRLQ…QYEQ), 468-570 (DLQL…AQLA), 574-676 (HLQQ…KLRE), 679-781 (QQQQ…QKLA), 785-888 (RLQQ…DLED), and 891-969 (QAQQ…ETGK). Serine 587 is modified (phosphoserine). An N6-acetyllysine modification is found at lysine 637. Lysine 803 carries the post-translational modification N6-acetyllysine. Phosphoserine is present on residues serine 924, serine 982, serine 999, serine 1029, serine 1031, and serine 1041. The region spanning 967–1026 (TGKELVLALYDYQEKSPREVTMKKGDILTLLNSTNKDWWKVEVNDRQGFVPAAYVKKLDP) is the SH3 domain. Residues 1096-1166 (LFREANELQQ…LESEGLMAEE (71 aa)) form a Spectrin 10 repeat. Position 1176 is a phosphotyrosine (tyrosine 1176). 7 positions are modified to phosphoserine: serine 1190, serine 1207, serine 1217, serine 1291, serine 1306, serine 1323, and serine 1338. Residues 1233–1336 (HEVQRFHRDA…RADQRKAKLG (104 aa)) form a Spectrin 11 repeat. 2 Spectrin repeats span residues 1339–1442 (HDLQ…MMLD) and 1446–1549 (ELQL…KLGE). Lysine 1519 is modified (N6-acetyllysine). Phosphoserine occurs at positions 1550, 1557, 1578, 1615, and 1647. Spectrin repeat units follow at residues 1552 to 1656 (TLQQ…KLKE), 1659 to 1762 (KQQN…KLNE), 1764 to 1868 (HRLH…RLEE), 1871 to 1974 (EYQQ…KLDE), 1978 to 2081 (FLQF…KLLE), 2092 to 2194 (LFLT…LELQ), and 2206 to 2310 (LRQE…NLEQ). Residue threonine 2020 is modified to Phosphothreonine. Lysine 2052 carries the N6-acetyllysine modification. EF-hand domains are found at residues 2323 to 2358 (EALK…LGYD), 2366 to 2401 (EPDP…RETE), and 2404 to 2439 (KSSE…EQAD). Ca(2+) is bound by residues aspartate 2336, aspartate 2338, serine 2340, arginine 2342, glutamate 2347, aspartate 2379, asparagine 2381, aspartate 2383, histidine 2385, and glutamate 2390. N6-acetyllysine is present on lysine 2421.

It belongs to the spectrin family. As to quaternary structure, like erythrocyte spectrin, the spectrin-like proteins are capable of forming dimers which can further associate to tetramers. Interacts (via C-terminal spectrin repeats) with TRPC4. Interacts with CALM and EMD. Interacts with isoform 1 of ACP1. Identified in a complex with ACTN4, CASK, IQGAP1, MAGI2, NPHS1 and SPTBN1. Interacts with SHANK3 (via ANK repeats). Interacts with CLN3; this interaction regulates the fodrin localization at the plasma membrane. Post-translationally, phosphorylation of Tyr-1176 decreases sensitivity to cleavage by calpain in vitro.

The protein resides in the cytoplasm. The protein localises to the cytoskeleton. It localises to the cell cortex. Functionally, fodrin, which seems to be involved in secretion, interacts with calmodulin in a calcium-dependent manner and is thus candidate for the calcium-dependent movement of the cytoskeleton at the membrane. In Homo sapiens (Human), this protein is Spectrin alpha chain, non-erythrocytic 1 (SPTAN1).